We begin with the raw amino-acid sequence, 499 residues long: Glycerol kinase (499 aa).

T13 is a binding site for ADP. Residues T13, T14, and S15 each coordinate ATP. Position 13 (T13) interacts with sn-glycerol 3-phosphate. R17 serves as a coordination point for ADP. 4 residues coordinate sn-glycerol 3-phosphate: R83, E84, Y135, and D244. Residues R83, E84, Y135, D244, and Q245 each contribute to the glycerol site. 2 residues coordinate ADP: T266 and G309. T266, G309, Q313, and G410 together coordinate ATP. Residues G410 and N414 each coordinate ADP.

Belongs to the FGGY kinase family.

The enzyme catalyses glycerol + ATP = sn-glycerol 3-phosphate + ADP + H(+). Its pathway is polyol metabolism; glycerol degradation via glycerol kinase pathway; sn-glycerol 3-phosphate from glycerol: step 1/1. Inhibited by fructose 1,6-bisphosphate (FBP). In terms of biological role, key enzyme in the regulation of glycerol uptake and metabolism. Catalyzes the phosphorylation of glycerol to yield sn-glycerol 3-phosphate. The sequence is that of Glycerol kinase from Paraburkholderia phytofirmans (strain DSM 17436 / LMG 22146 / PsJN) (Burkholderia phytofirmans).